The sequence spans 412 residues: Peptidyl-prolyl cis-trans isomerase FKBP8 (412 aa).

The segment at 1–68 (MASCAEPSEP…GQPPAEEAEQ (68 aa)) is disordered. The span at 22–50 (EDFEVLDGVEDAEGEEEEEEEEEEEDDLS) shows a compositional bias: acidic residues. The region spanning 120–204 (GQVVTVHLQT…CLEVTLKTAV (85 aa)) is the PPIase FKBP-type domain. Ca(2+)-binding residues include aspartate 149 and aspartate 151. One copy of the TPR 1 repeat lies at 221–254 (ANRKRECGNAHYQRADFVLAANSYDLAIKAITSS). Residues lysine 249, lysine 271, lysine 273, and lysine 284 each participate in a glycyl lysine isopeptide (Lys-Gly) (interchain with G-Cter in ubiquitin) cross-link. TPR repeat units lie at residues 272–305 (VKCL…QPDN) and 306–339 (IKAL…EPSN). Serine 296 is subject to Phosphoserine. Glycyl lysine isopeptide (Lys-Gly) (interchain with G-Cter in ubiquitin) cross-links involve residues lysine 307, lysine 314, lysine 334, lysine 340, lysine 348, lysine 351, and lysine 352. A helical membrane pass occupies residues 390–410 (WLFGATAVALGGVALSVVIAA).

As to quaternary structure, homomultimers or heteromultimers (Potential). Forms heterodimer with calmodulin. When activated by calmodulin and calcium, interacts with the BH4 domain of BCL2 and weakly with BCL2L1/BCLX isoform Bcl-X(L). Does not bind and inhibit calcineurin. Interacts with ZFYVE27; may negatively regulate ZFYVE27 phosphorylation. (Microbial infection) Interacts with hepatitis C/HCV protein NS5A. The cofactor is Ca(2+). In terms of processing, ubiquitinated by PRKN during mitophagy, leading to its degradation and enhancement of mitophagy. Deubiquitinated by USP30. In terms of tissue distribution, widely expressed. Highest levels seen in the brain. Highly abundant in the retina.

The protein localises to the mitochondrion. It localises to the mitochondrion membrane. The enzyme catalyses [protein]-peptidylproline (omega=180) = [protein]-peptidylproline (omega=0). In terms of biological role, constitutively inactive PPiase, which becomes active when bound to calmodulin and calcium. Seems to act as a chaperone for BCL2, targets it to the mitochondria and modulates its phosphorylation state. The BCL2/FKBP8/calmodulin/calcium complex probably interferes with the binding of BCL2 to its targets. The active form of FKBP8 may therefore play a role in the regulation of apoptosis. Involved in the inhibition of viral infection by influenza A viruses (IAV). This chain is Peptidyl-prolyl cis-trans isomerase FKBP8 (FKBP8), found in Homo sapiens (Human).